Here is a 323-residue protein sequence, read N- to C-terminus: 4-hydroxy-3-methylbut-2-enyl diphosphate reductase (323 aa).

Residue cysteine 21 participates in [4Fe-4S] cluster binding. Residues histidine 50 and histidine 83 each coordinate (2E)-4-hydroxy-3-methylbut-2-enyl diphosphate. Dimethylallyl diphosphate-binding residues include histidine 50 and histidine 83. Isopentenyl diphosphate is bound by residues histidine 50 and histidine 83. [4Fe-4S] cluster is bound at residue cysteine 105. Position 133 (histidine 133) interacts with (2E)-4-hydroxy-3-methylbut-2-enyl diphosphate. Histidine 133 is a binding site for dimethylallyl diphosphate. Histidine 133 lines the isopentenyl diphosphate pocket. The active-site Proton donor is the glutamate 135. Threonine 173 contacts (2E)-4-hydroxy-3-methylbut-2-enyl diphosphate. Cysteine 203 contacts [4Fe-4S] cluster. Residues serine 231, serine 232, asparagine 233, and serine 276 each contribute to the (2E)-4-hydroxy-3-methylbut-2-enyl diphosphate site. Positions 231, 232, 233, and 276 each coordinate dimethylallyl diphosphate. Positions 231, 232, 233, and 276 each coordinate isopentenyl diphosphate.

This sequence belongs to the IspH family. The cofactor is [4Fe-4S] cluster.

It carries out the reaction isopentenyl diphosphate + 2 oxidized [2Fe-2S]-[ferredoxin] + H2O = (2E)-4-hydroxy-3-methylbut-2-enyl diphosphate + 2 reduced [2Fe-2S]-[ferredoxin] + 2 H(+). The enzyme catalyses dimethylallyl diphosphate + 2 oxidized [2Fe-2S]-[ferredoxin] + H2O = (2E)-4-hydroxy-3-methylbut-2-enyl diphosphate + 2 reduced [2Fe-2S]-[ferredoxin] + 2 H(+). The protein operates within isoprenoid biosynthesis; dimethylallyl diphosphate biosynthesis; dimethylallyl diphosphate from (2E)-4-hydroxy-3-methylbutenyl diphosphate: step 1/1. Its pathway is isoprenoid biosynthesis; isopentenyl diphosphate biosynthesis via DXP pathway; isopentenyl diphosphate from 1-deoxy-D-xylulose 5-phosphate: step 6/6. Catalyzes the conversion of 1-hydroxy-2-methyl-2-(E)-butenyl 4-diphosphate (HMBPP) into a mixture of isopentenyl diphosphate (IPP) and dimethylallyl diphosphate (DMAPP). Acts in the terminal step of the DOXP/MEP pathway for isoprenoid precursor biosynthesis. This Cutibacterium acnes (strain DSM 16379 / KPA171202) (Propionibacterium acnes) protein is 4-hydroxy-3-methylbut-2-enyl diphosphate reductase.